The chain runs to 308 residues: MFLLYEKEDIYMAINSKDFIPRPGFVNKQGCLPDPVEITCIQVPKVFDQCLIKECLKPTDDCEQLCKQIPNITDPAQVRCVGCCKDLKVKVNSVTKCPVSNGKPGHKKVTINFTVTFDVDVDVEINGVIHTETLNFSVNRTITASNLYCPDAIAKTIIGKECTSAEEIDQQFIKLEVVGECLSTDISKIDCDNDCCSCSCTCEDNGDKKVFLCITLGLFIIIKCEIVVQLMVPAYGYCPVPEECKCSHDPCKEFMERELPTLYPPQEMDNLFDDYDERQDERHIHDRKHIEEEEERGNLVTSSIIASN.

The protein localises to the spore wall. This chain is Exosporium protein A, found in Clostridium sporogenes (strain ATCC 15579).